The chain runs to 210 residues: Urease accessory protein UreF (210 aa).

The protein belongs to the UreF family. UreD, UreF and UreG form a complex that acts as a GTP-hydrolysis-dependent molecular chaperone, activating the urease apoprotein by helping to assemble the nickel containing metallocenter of UreC. The UreE protein probably delivers the nickel.

The protein localises to the cytoplasm. In terms of biological role, required for maturation of urease via the functional incorporation of the urease nickel metallocenter. In Cereibacter sphaeroides (strain ATCC 17023 / DSM 158 / JCM 6121 / CCUG 31486 / LMG 2827 / NBRC 12203 / NCIMB 8253 / ATH 2.4.1.) (Rhodobacter sphaeroides), this protein is Urease accessory protein UreF.